Consider the following 306-residue polypeptide: Ornithine carbamoyltransferase (306 aa).

Residues 51–54, Gln-78, Arg-102, and 129–132 contribute to the carbamoyl phosphate site; these read STRT and HPVQ. L-ornithine-binding positions include Asn-159, Asp-223, and 227 to 228; that span reads SM. Residues 263–264 and Arg-291 each bind carbamoyl phosphate; that span reads CL.

It belongs to the aspartate/ornithine carbamoyltransferase superfamily. OTCase family.

It localises to the cytoplasm. The enzyme catalyses carbamoyl phosphate + L-ornithine = L-citrulline + phosphate + H(+). It participates in amino-acid biosynthesis; L-arginine biosynthesis; L-arginine from L-ornithine and carbamoyl phosphate: step 1/3. Functionally, reversibly catalyzes the transfer of the carbamoyl group from carbamoyl phosphate (CP) to the N(epsilon) atom of ornithine (ORN) to produce L-citrulline. This chain is Ornithine carbamoyltransferase, found in Sulfurovum sp. (strain NBC37-1).